Consider the following 397-residue polypeptide: Inositol 3-kinase (397 aa).

Residues Ser-228, 278–281 (GAGD), and Asn-305 each bind ATP. Asp-281 (proton acceptor) is an active-site residue.

This sequence belongs to the carbohydrate kinase pfkB family. In terms of tissue distribution, expressed in roots, leaf blade shoots, leaf sheath shoots and panicles.

The catalysed reaction is myo-inositol + ATP = 1D-myo-inositol 3-phosphate + ADP + H(+). Functionally, kinase that phosphorylates myo-inositol to produce multiple myo-inositol monophosphates. Participates in phytic acid biosynthesis in developing seeds. Phytic acid is the primary storage form of phosphorus in cereal grains and other plant seeds. The chain is Inositol 3-kinase from Oryza sativa subsp. japonica (Rice).